A 127-amino-acid polypeptide reads, in one-letter code: Small ribosomal subunit protein uS11 (127 aa).

Belongs to the universal ribosomal protein uS11 family. As to quaternary structure, part of the 30S ribosomal subunit. Interacts with proteins S7 and S18. Binds to IF-3.

Functionally, located on the platform of the 30S subunit, it bridges several disparate RNA helices of the 16S rRNA. Forms part of the Shine-Dalgarno cleft in the 70S ribosome. This is Small ribosomal subunit protein uS11 from Rickettsia prowazekii (strain Madrid E).